Reading from the N-terminus, the 227-residue chain is Apoptosis regulator OPG045 (227 aa).

This sequence belongs to the orthopoxvirus OPG045 family. In terms of assembly, homodimer. Interacts with host pro-apoptotic protein BCL2L11 (via BH3 domain). Interacts with host NLRP1. Interacts with host BAK.

The protein localises to the host mitochondrion outer membrane. It is found in the host cytoplasm. In terms of biological role, plays a role in evading host innate immune response by inhibiting host inflammasome activation. Interacts with and inhibits NLR-mediated interleukin-1 beta/IL1B production in infected cells. At the host mitochondria outer membrane, interacts with the BH3 domain of host BAK and prevents BAK from binding active BAX. In turn, host apoptosis is inhibited. The chain is Apoptosis regulator OPG045 (OPG045) from Oryctolagus cuniculus (Rabbit).